The primary structure comprises 317 residues: Protease HtpX homolog (317 aa).

2 helical membrane-spanning segments follow: residues 6–26 and 28–48; these read TAIL…AIGG and GGMM…YWNS. His-130 contributes to the Zn(2+) binding site. Residue Glu-131 is part of the active site. His-134 serves as a coordination point for Zn(2+). The next 2 membrane-spanning stretches (helical) occupy residues 145–165 and 173–193; these read MTAT…LFGG and PFGA…AMLV. Residue Glu-202 coordinates Zn(2+). The interval 283–317 is disordered; it reads GGGGFAPGPAPAVRPPGGNPWGVDPGGGQRRGPWG. A compositionally biased stretch (pro residues) spans 290-300; it reads GPAPAVRPPGG. The segment covering 306–317 has biased composition (gly residues); the sequence is DPGGGQRRGPWG.

It belongs to the peptidase M48B family. The cofactor is Zn(2+).

The protein localises to the cell inner membrane. The chain is Protease HtpX homolog from Xanthobacter autotrophicus (strain ATCC BAA-1158 / Py2).